The following is a 577-amino-acid chain: Aspartate--tRNA ligase (577 aa).

Position 171 (Glu-171) interacts with L-aspartate. The interval 195–198 (QLFK) is aspartate. An L-aspartate-binding site is contributed by Arg-217. Residues 217 to 219 (RDE) and Gln-226 contribute to the ATP site. Residue His-437 participates in L-aspartate binding. ATP is bound at residue Glu-472. Position 479 (Arg-479) interacts with L-aspartate. 524–527 (GFDR) is a binding site for ATP.

Belongs to the class-II aminoacyl-tRNA synthetase family. Type 1 subfamily. In terms of assembly, homodimer.

Its subcellular location is the cytoplasm. It catalyses the reaction tRNA(Asp) + L-aspartate + ATP = L-aspartyl-tRNA(Asp) + AMP + diphosphate. Functionally, catalyzes the attachment of L-aspartate to tRNA(Asp) in a two-step reaction: L-aspartate is first activated by ATP to form Asp-AMP and then transferred to the acceptor end of tRNA(Asp). This chain is Aspartate--tRNA ligase, found in Deinococcus deserti (strain DSM 17065 / CIP 109153 / LMG 22923 / VCD115).